The primary structure comprises 314 residues: Mycothiol acetyltransferase (314 aa).

E39 is a 1D-myo-inositol 2-(L-cysteinylamino)-2-deoxy-alpha-D-glucopyranoside binding site. 80-82 is a binding site for acetyl-CoA; that stretch reads LTA. The N-acetyltransferase domain occupies 159 to 313; it reads FVCRRFDPIS…PTGELGHEPP (155 aa). 3 residues coordinate 1D-myo-inositol 2-(L-cysteinylamino)-2-deoxy-alpha-D-glucopyranoside: E186, K228, and E237. Residues 241–243 and 248–254 contribute to the acetyl-CoA site; these read LGV and QGQGVGR. Y275 provides a ligand contact to 1D-myo-inositol 2-(L-cysteinylamino)-2-deoxy-alpha-D-glucopyranoside.

It belongs to the acetyltransferase family. MshD subfamily. In terms of assembly, monomer.

The catalysed reaction is 1D-myo-inositol 2-(L-cysteinylamino)-2-deoxy-alpha-D-glucopyranoside + acetyl-CoA = mycothiol + CoA + H(+). Functionally, catalyzes the transfer of acetyl from acetyl-CoA to desacetylmycothiol (Cys-GlcN-Ins) to form mycothiol. This chain is Mycothiol acetyltransferase, found in Jonesia denitrificans (strain ATCC 14870 / DSM 20603 / BCRC 15368 / CIP 55.134 / JCM 11481 / NBRC 15587 / NCTC 10816 / Prevot 55134) (Listeria denitrificans).